Reading from the N-terminus, the 949-residue chain is Probable transcriptional regulatory protein STB4 (949 aa).

Residues 87 to 113 (CELCKKRKVKCDGNNPCLNCSKHQKEC) constitute a DNA-binding region (zn(2)-C6 fungal-type). Low complexity-rich tracts occupy residues 164 to 178 (DGVSSSASNSPNPNS) and 200 to 212 (SGSNLNGENNNNS). 2 disordered regions span residues 164 to 214 (DGVS…NSFP) and 862 to 888 (GEREENADERQENPHNNSKRVPLATRS). Basic and acidic residues predominate over residues 862-874 (GEREENADERQEN).

The protein localises to the nucleus. Binds to SIN3. This Saccharomyces cerevisiae (strain ATCC 204508 / S288c) (Baker's yeast) protein is Probable transcriptional regulatory protein STB4 (STB4).